A 654-amino-acid chain; its full sequence is Probable replication restart protein PriA (654 aa).

Zn(2+) is bound by residues cysteine 367, cysteine 370, cysteine 376, cysteine 379, cysteine 395, cysteine 398, cysteine 407, and cysteine 410.

The protein belongs to the helicase family. PriA subfamily. As to quaternary structure, component of the replication restart primosome. Zn(2+) is required as a cofactor.

Functionally, initiates the restart of stalled replication forks, which reloads the replicative helicase on sites other than the origin of replication. Recognizes and binds to abandoned replication forks and remodels them to uncover a helicase loading site. Promotes assembly of the primosome at these replication forks. The chain is Probable replication restart protein PriA from Mycobacterium tuberculosis (strain CDC 1551 / Oshkosh).